A 532-amino-acid chain; its full sequence is UDP-glucuronosyltransferase 1A6 (532 aa).

The first 26 residues, 1-26, serve as a signal peptide directing secretion; the sequence is MACLLRSFQRISAGVFFLALWGMVVG. 2 N-linked (GlcNAc...) asparagine glycosylation sites follow: Asn-294 and Asn-346. A helical membrane pass occupies residues 490–506; the sequence is VIGFLLAVVLTVAFITF.

This sequence belongs to the UDP-glycosyltransferase family. Isoform 1 interacts with isoform 3/i2 suggesting that oligomerization is involved in negative regulation of transferase activity by isoform 3. Isoform 1 also interacts with respective i2 isoforms of UGT1A1, UGT1A3, UGT1A4, UGT1A7, UGT1A8, UGT1A9 and UGT1A10. As to expression, expressed in skin. Isoforms 1 and 3 are expressed in kidney and liver. Isoform 1 but not isoform 2 is expressed in colon, esophagus and small intestine.

The protein resides in the microsome. Its subcellular location is the endoplasmic reticulum membrane. It catalyses the reaction glucuronate acceptor + UDP-alpha-D-glucuronate = acceptor beta-D-glucuronoside + UDP + H(+). The enzyme catalyses (5Z,8Z,11Z,14Z)-eicosatetraenoate + UDP-alpha-D-glucuronate = O-[(5Z),(8Z),(11Z),(14Z)-eicosatetraenoyl]-beta-D-glucuronate + UDP. The catalysed reaction is 15-hydroxy-(5Z,8Z,11Z,13E)-eicosatetraenoate + UDP-alpha-D-glucuronate = 15-O-(beta-D-glucuronosyl)-(5Z,8Z,11Z,14Z)-eicosatetraenoate + UDP + H(+). It carries out the reaction (E)-ferulate + UDP-alpha-D-glucuronate = (E)-4-O-(beta-D-glucuronosyl)-ferulate + UDP + H(+). It catalyses the reaction (E)-ferulate + UDP-alpha-D-glucuronate = (E)-ferulic acid beta-D-glucuronate ester + UDP. Functionally, UDP-glucuronosyltransferase (UGT) that catalyzes phase II biotransformation reactions in which lipophilic substrates are conjugated with glucuronic acid to facilitate their inactivation and excretion from the body. Essential for the elimination and detoxification of drugs, xenobiotics and endogenous compounds. Involved in the glucuronidation of arachidonic acid (AA) and AA-derived eicosanoids including 15-HETE and 20-HETE. Conjugates small planar phenolic molecules such as 4-nitrophenol, 1-naphthol, and 4-methylumbelliferone. The bulky phenol 4-hydroxybiphenyl, androgens and estrogens are not substrates. 2-hydroxybiphenyl is an excellent substrate. Involved in the glucuronidation of the phytochemical ferulic acid at the phenolic or the carboxylic acid group. Isoform 3 lacks transferase activity but acts as a negative regulator of isoform 1. The protein is UDP-glucuronosyltransferase 1A6 of Homo sapiens (Human).